The chain runs to 511 residues: Steroid 17-alpha-hydroxylase/17,20 lyase (511 aa).

Cys-442 provides a ligand contact to heme.

This sequence belongs to the cytochrome P450 family. Requires heme as cofactor.

Its subcellular location is the endoplasmic reticulum membrane. The protein resides in the microsome membrane. The catalysed reaction is a C21-steroid + reduced [NADPH--hemoprotein reductase] + O2 = a 17alpha-hydroxy-C21-steroid + oxidized [NADPH--hemoprotein reductase] + H2O + H(+). It carries out the reaction progesterone + reduced [NADPH--hemoprotein reductase] + O2 = 17alpha-hydroxyprogesterone + oxidized [NADPH--hemoprotein reductase] + H2O + H(+). It catalyses the reaction pregnenolone + reduced [NADPH--hemoprotein reductase] + O2 = 17alpha-hydroxypregnenolone + oxidized [NADPH--hemoprotein reductase] + H2O + H(+). The enzyme catalyses 17alpha-hydroxyprogesterone + reduced [NADPH--hemoprotein reductase] + O2 = androst-4-ene-3,17-dione + acetate + oxidized [NADPH--hemoprotein reductase] + H2O + 2 H(+). The catalysed reaction is 17alpha-hydroxyprogesterone + reduced [NADPH--hemoprotein reductase] + O2 = 16alpha,17alpha-dihydroxyprogesterone + oxidized [NADPH--hemoprotein reductase] + H2O + H(+). It carries out the reaction 16alpha,17alpha-dihydroxyprogesterone + reduced [NADPH--hemoprotein reductase] + O2 = 6beta,16alpha,17alpha-trihydroxyprogesterone + oxidized [NADPH--hemoprotein reductase] + H2O + H(+). It catalyses the reaction 17alpha-hydroxypregnenolone + reduced [NADPH--hemoprotein reductase] + O2 = 3beta-hydroxyandrost-5-en-17-one + acetate + oxidized [NADPH--hemoprotein reductase] + H2O + 2 H(+). The enzyme catalyses 16alpha,17alpha-dihydroxypregnenolone + reduced [NADPH--hemoprotein reductase] + O2 = 3beta,16alpha-dihydroxy-androst-5-en-17-one + acetate + oxidized [NADPH--hemoprotein reductase] + H2O + 2 H(+). The catalysed reaction is 3beta-hydroxyandrost-5-en-17-one + reduced [NADPH--hemoprotein reductase] + O2 = 3beta,16alpha-dihydroxy-androst-5-en-17-one + oxidized [NADPH--hemoprotein reductase] + H2O + H(+). It carries out the reaction androst-4-ene-3,17-dione + reduced [NADPH--hemoprotein reductase] + O2 = 16alpha-hydroxyandrost-4-ene-3,17-dione + oxidized [NADPH--hemoprotein reductase] + H2O + H(+). It functions in the pathway steroid hormone biosynthesis. The protein operates within steroid biosynthesis; glucocorticoid biosynthesis. Regulated predominantly by intracellular cAMP levels. The 17,20-lyase activity is stimulated by cytochrome b5, which acts as an allosteric effector increasing the Vmax of the lyase activity. Functionally, a cytochrome P450 monooxygenase involved in corticoid and androgen biosynthesis. Catalyzes 17-alpha hydroxylation of C21 steroids, which is common for both pathways. A second oxidative step, required only for androgen synthesis, involves an acyl-carbon cleavage. The 17-alpha hydroxy intermediates, as part of adrenal glucocorticoids biosynthesis pathway, are precursors of cortisol. Hydroxylates steroid hormones, pregnenolone and progesterone to form 17-alpha hydroxy metabolites, followed by the cleavage of the C17-C20 bond to form C19 steroids, dehydroepiandrosterone (DHEA) and androstenedione. Has 16-alpha hydroxylase activity. Catalyzes 16-alpha hydroxylation of 17-alpha hydroxy pregnenolone, followed by the cleavage of the C17-C20 bond to form 16-alpha-hydroxy DHEA. Also 16-alpha hydroxylates androgens, relevant for estriol synthesis. Mechanistically, uses molecular oxygen inserting one oxygen atom into a substrate, and reducing the second into a water molecule, with two electrons provided by NADPH via cytochrome P450 reductase (CPR; NADPH-ferrihemoprotein reductase). The protein is Steroid 17-alpha-hydroxylase/17,20 lyase (CYP17A1) of Mesocricetus auratus (Golden hamster).